The primary structure comprises 317 residues: 4-hydroxy-3-methylbut-2-enyl diphosphate reductase (317 aa).

Cys-12 provides a ligand contact to [4Fe-4S] cluster. Residues His-41 and His-74 each coordinate (2E)-4-hydroxy-3-methylbut-2-enyl diphosphate. Positions 41 and 74 each coordinate dimethylallyl diphosphate. Isopentenyl diphosphate contacts are provided by His-41 and His-74. Cys-97 serves as a coordination point for [4Fe-4S] cluster. A (2E)-4-hydroxy-3-methylbut-2-enyl diphosphate-binding site is contributed by His-125. Dimethylallyl diphosphate is bound at residue His-125. Residue His-125 participates in isopentenyl diphosphate binding. Glu-127 acts as the Proton donor in catalysis. Thr-168 contacts (2E)-4-hydroxy-3-methylbut-2-enyl diphosphate. Residue Cys-198 participates in [4Fe-4S] cluster binding. Residues Ser-226, Ser-227, Asn-228, and Ser-270 each contribute to the (2E)-4-hydroxy-3-methylbut-2-enyl diphosphate site. The dimethylallyl diphosphate site is built by Ser-226, Ser-227, Asn-228, and Ser-270. Positions 226, 227, 228, and 270 each coordinate isopentenyl diphosphate.

The protein belongs to the IspH family. Homodimer. It depends on [4Fe-4S] cluster as a cofactor.

It catalyses the reaction isopentenyl diphosphate + 2 oxidized [2Fe-2S]-[ferredoxin] + H2O = (2E)-4-hydroxy-3-methylbut-2-enyl diphosphate + 2 reduced [2Fe-2S]-[ferredoxin] + 2 H(+). It carries out the reaction dimethylallyl diphosphate + 2 oxidized [2Fe-2S]-[ferredoxin] + H2O = (2E)-4-hydroxy-3-methylbut-2-enyl diphosphate + 2 reduced [2Fe-2S]-[ferredoxin] + 2 H(+). It functions in the pathway isoprenoid biosynthesis; dimethylallyl diphosphate biosynthesis; dimethylallyl diphosphate from (2E)-4-hydroxy-3-methylbutenyl diphosphate: step 1/1. Its pathway is isoprenoid biosynthesis; isopentenyl diphosphate biosynthesis via DXP pathway; isopentenyl diphosphate from 1-deoxy-D-xylulose 5-phosphate: step 6/6. In terms of biological role, catalyzes the conversion of 1-hydroxy-2-methyl-2-(E)-butenyl 4-diphosphate (HMBPP) into a mixture of isopentenyl diphosphate (IPP) and dimethylallyl diphosphate (DMAPP). Acts in the terminal step of the DOXP/MEP pathway for isoprenoid precursor biosynthesis. This chain is 4-hydroxy-3-methylbut-2-enyl diphosphate reductase, found in Yersinia pseudotuberculosis serotype O:1b (strain IP 31758).